The sequence spans 303 residues: Ribosomal RNA small subunit methyltransferase H (303 aa).

Residues Gly33–His35, Asp52, Phe79, Asp97, and Gln104 contribute to the S-adenosyl-L-methionine site.

It belongs to the methyltransferase superfamily. RsmH family.

It is found in the cytoplasm. It carries out the reaction cytidine(1402) in 16S rRNA + S-adenosyl-L-methionine = N(4)-methylcytidine(1402) in 16S rRNA + S-adenosyl-L-homocysteine + H(+). In terms of biological role, specifically methylates the N4 position of cytidine in position 1402 (C1402) of 16S rRNA. This chain is Ribosomal RNA small subunit methyltransferase H, found in Wolinella succinogenes (strain ATCC 29543 / DSM 1740 / CCUG 13145 / JCM 31913 / LMG 7466 / NCTC 11488 / FDC 602W) (Vibrio succinogenes).